The chain runs to 202 residues: Ras-related protein Rab-18 (202 aa).

GTP-binding residues include serine 18, glycine 21, lysine 22, serine 23, serine 24, aspartate 35, proline 36, threonine 41, glycine 67, lysine 124, aspartate 126, and alanine 153. Positions 38-46 match the Effector region motif; that stretch reads QAATIGVDF. 2 S-geranylgeranyl cysteine lipidation sites follow: cysteine 198 and cysteine 200.

This sequence belongs to the small GTPase superfamily. Rab family.

The protein resides in the cell membrane. It carries out the reaction GTP + H2O = GDP + phosphate + H(+). The small GTPases Rab are key regulators of intracellular membrane trafficking, from the formation of transport vesicles to their fusion with membranes. Rabs cycle between an inactive GDP-bound form and an active GTP-bound form that is able to recruit to membranes different sets of downstream effectors directly responsible for vesicle formation, movement, tethering and fusion. This Lymnaea stagnalis (Great pond snail) protein is Ras-related protein Rab-18 (RAB18A).